The following is a 374-amino-acid chain: Retron Eco8 reverse transcriptase (374 aa).

In terms of domain architecture, Reverse transcriptase spans 25-252; it reads ENIITQSAIP…KEISINGYVI (228 aa). The Mg(2+) site is built by D107, D200, and D201.

It belongs to the bacterial reverse transcriptase family.

It catalyses the reaction DNA(n) + a 2'-deoxyribonucleoside 5'-triphosphate = DNA(n+1) + diphosphate. Functionally, reverse transcriptase (RT) component of antiviral defense system retron Eco8, composed of this RT, the following endonuclease and a non-coding RNA (ncRNA) encoded between them. Expression of retron Eco8 confers protection against bacteriophages T4, T6, T7 and SECphi4, SECphi6 and SECphi18. At multiplicity of infection (MOI) of 0.02 cultures slow growth when infected with SECphi4 but do not collapse, at MOI 2 cultures collapse. Responsible for synthesis of msDNA (a branched molecule with RNA linked by a 2',5'-phosphodiester bond to ssDNA). The retron transcript serves as primer (from a conserved internal G residue) and template for the reaction, and codes for the RT. This Escherichia coli protein is Retron Eco8 reverse transcriptase.